Consider the following 193-residue polypeptide: Ion-translocating oxidoreductase complex subunit A (193 aa).

Transmembrane regions (helical) follow at residues 5 to 25 (LLLF…FLGL), 47 to 67 (FVIT…LLPL), 72 to 92 (LRTM…EMVV), 102 to 122 (LLGI…VPLL), 134 to 154 (AIYG…FAGV), and 171 to 191 (SIAL…AGLV).

Belongs to the NqrDE/RnfAE family. As to quaternary structure, the complex is composed of six subunits: RnfA, RnfB, RnfC, RnfD, RnfE and RnfG.

Its subcellular location is the cell inner membrane. Part of a membrane-bound complex that couples electron transfer with translocation of ions across the membrane. The chain is Ion-translocating oxidoreductase complex subunit A from Erwinia tasmaniensis (strain DSM 17950 / CFBP 7177 / CIP 109463 / NCPPB 4357 / Et1/99).